The chain runs to 521 residues: Glutamyl-tRNA(Gln) amidotransferase subunit A (521 aa).

Catalysis depends on charge relay system residues Lys-79 and Ser-187. Ser-211 acts as the Acyl-ester intermediate in catalysis.

The protein belongs to the amidase family. GatA subfamily. Heterotrimer of A, B and C subunits.

It catalyses the reaction L-glutamyl-tRNA(Gln) + L-glutamine + ATP + H2O = L-glutaminyl-tRNA(Gln) + L-glutamate + ADP + phosphate + H(+). Its function is as follows. Allows the formation of correctly charged Gln-tRNA(Gln) through the transamidation of misacylated Glu-tRNA(Gln) in organisms which lack glutaminyl-tRNA synthetase. The reaction takes place in the presence of glutamine and ATP through an activated gamma-phospho-Glu-tRNA(Gln). This chain is Glutamyl-tRNA(Gln) amidotransferase subunit A, found in Mesorhizobium japonicum (strain LMG 29417 / CECT 9101 / MAFF 303099) (Mesorhizobium loti (strain MAFF 303099)).